The primary structure comprises 409 residues: tRNA(Met) cytidine acetate ligase (409 aa).

ATP is bound by residues 7–20 (VVEY…HLYH), Gly-102, Asn-169, and Arg-194.

This sequence belongs to the TmcAL family.

Its subcellular location is the cytoplasm. It carries out the reaction cytidine(34) in elongator tRNA(Met) + acetate + ATP = N(4)-acetylcytidine(34) in elongator tRNA(Met) + AMP + diphosphate. Its function is as follows. Catalyzes the formation of N(4)-acetylcytidine (ac(4)C) at the wobble position of elongator tRNA(Met), using acetate and ATP as substrates. First activates an acetate ion to form acetyladenylate (Ac-AMP) and then transfers the acetyl group to tRNA to form ac(4)C34. This is tRNA(Met) cytidine acetate ligase from Clostridium botulinum (strain Kyoto / Type A2).